The chain runs to 597 residues: Phosphoinositide phospholipase C 4 (597 aa).

Residues 26–60 (GPVEDVRDLFEKYTEGDAHMSPEQLQKLMTEEGGE) enclose the EF-hand domain. The 144-residue stretch at 114-257 (QNMDAPLSHY…LKEKILISTK (144 aa)) folds into the PI-PLC X-box domain. Active-site residues include His129 and His174. Residues 259 to 290 (PKEYLEANDTKEKDNGEKGKDSDEDVWGKEPE) are compositionally biased toward basic and acidic residues. Residues 259–324 (PKEYLEANDT…ERGSCESDTS (66 aa)) form a disordered region. Polar residues predominate over residues 293-309 (ISTQSDLDKVTSSVNDL). Residues 333–449 (KRLIAIHAGK…GYVKKPDFLM (117 aa)) form the PI-PLC Y-box domain. The C2 domain occupies 449–579 (MDASPNGQDF…QGIRAVPLFN (131 aa)).

Requires Ca(2+) as cofactor. Low expression in leaves, roots, flowers and siliques. Expressed in pollen and in cells of the stigma surface.

It localises to the cytoplasm. The protein localises to the cytosol. It is found in the cell membrane. It catalyses the reaction a 1,2-diacyl-sn-glycero-3-phospho-(1D-myo-inositol-4,5-bisphosphate) + H2O = 1D-myo-inositol 1,4,5-trisphosphate + a 1,2-diacyl-sn-glycerol + H(+). Its function is as follows. The production of the second messenger molecules diacylglycerol (DAG) and inositol 1,4,5-trisphosphate (IP3) is mediated by activated phosphatidylinositol-specific phospholipase C enzymes. The sequence is that of Phosphoinositide phospholipase C 4 (PLC4) from Arabidopsis thaliana (Mouse-ear cress).